Consider the following 645-residue polypeptide: MSMACYYLAAAAAGLALLLLHAPLTDAQTLVPLCGDSGNYTEHGTYHANIQYLATSLPSYASSSPSLFASGSSGTVPDAIYALALCRGDTNSSSCATCVAAAIQSAQELCPLVKTVIVYDDTCILRFANDAFPISPTSNSQGMVVAWKAQNVSAAVAPAFEAAVVRLINTTADYAATDSVRRFGTGEEAFDETTFPKIYSLAQCTPDMAATACRSCLEDIVGRMVSGNLIGRMGGRVLGVRCNLWFEVYPFFSGRSLLQLPGPSPSPAPPVTAAGERSKNKRSAILAISMPTIALVLATIAAWFCSTSWRRRRLARKTLRPKSSEDEMQSFASLVLDLQTLRTATDNFSEHKRLGEGGFGVVYKGDLPEGQEIAVKRLAQTSRQGIEELKTELLLVAKLNHNNLVRLIGVCLEENEKILAYEYMPNRSLDTILFDAERIKELDWGQRFKIINGIARGLQYLHEDSQLKIVHRDLKASNVLLDSAYNPKISDFGLAKIFERDQSQVITHRIAGTYGYMSPEYAMRGQYSMKLDVYSFGVLVLEIITGRRNFGSYGSDHVVDLIYVTWEHWTSDKAIELIDPSLGNHYPVDKVLKCIHIGLLCVQPKPADRPLMSAVNAMLSSTGTVRLPCLSRPSFWVQEIGATAS.

The first 27 residues, 1-27, serve as a signal peptide directing secretion; the sequence is MSMACYYLAAAAAGLALLLLHAPLTDA. 2 consecutive Gnk2-homologous domains span residues 28–132 and 140–251; these read QTLV…NDAF and SQGM…VYPF. Residues 28-283 are Extracellular-facing; it reads QTLVPLCGDS…AGERSKNKRS (256 aa). 2 N-linked (GlcNAc...) asparagine glycosylation sites follow: Asn-39 and Asn-91. 2 disulfide bridges follow: Cys-86–Cys-95 and Cys-98–Cys-123. N-linked (GlcNAc...) asparagine glycans are attached at residues Asn-151 and Asn-169. 2 disulfide bridges follow: Cys-204/Cys-213 and Cys-216/Cys-242. A helical membrane pass occupies residues 284-304; the sequence is AILAISMPTIALVLATIAAWF. Over 305–645 the chain is Cytoplasmic; that stretch reads CSTSWRRRRL…WVQEIGATAS (341 aa). Residues 348 to 619 enclose the Protein kinase domain; the sequence is FSEHKRLGEG…PLMSAVNAML (272 aa). Residues 354–362 and Lys-376 each bind ATP; that span reads LGEGGFGVV. Asp-473 functions as the Proton acceptor in the catalytic mechanism.

The protein belongs to the protein kinase superfamily. Ser/Thr protein kinase family. CRK subfamily.

It localises to the membrane. Functionally, involved in disease resistance. Required for NPR1/NH1-mediated immunity to the bacterial blight pathogen Xanthomomas oryzae pv. oryzae (Xoo). Required for the benzothiadiazole (BTH)-induced immune response. Probably regulated by the transcription factor TGA2.1. The chain is Cysteine-rich receptor-like protein kinase 10 from Oryza sativa subsp. japonica (Rice).